The following is a 104-amino-acid chain: L-rhamnose mutarotase (104 aa).

Residue Y18 coordinates substrate. The active-site Proton donor is the H22. Residues Y41 and 76 to 77 (WW) contribute to the substrate site.

This sequence belongs to the rhamnose mutarotase family. In terms of assembly, homodimer.

The protein resides in the cytoplasm. It catalyses the reaction alpha-L-rhamnose = beta-L-rhamnose. The protein operates within carbohydrate metabolism; L-rhamnose metabolism. Involved in the anomeric conversion of L-rhamnose. This chain is L-rhamnose mutarotase, found in Jannaschia sp. (strain CCS1).